The following is a 262-amino-acid chain: uncharacterized protein (262 aa).

6 consecutive transmembrane segments (helical) span residues 7–27, 58–78, 114–134, 140–160, 179–199, and 216–236; these read LAVA…LAHM, DTLG…IVFG, FLAF…VLGG, GGFQ…IAFG, GALG…YYLF, and IITA…VLAG.

The protein localises to the cell membrane. This is an uncharacterized protein from Methanocaldococcus jannaschii (strain ATCC 43067 / DSM 2661 / JAL-1 / JCM 10045 / NBRC 100440) (Methanococcus jannaschii).